The sequence spans 396 residues: Elongation factor Tu (396 aa).

One can recognise a tr-type G domain in the interval 10-206 (KPHCNIGTIG…AVDAYIPQPE (197 aa)). Residues 19-26 (GHVDHGKT) form a G1 region. A GTP-binding site is contributed by 19–26 (GHVDHGKT). Threonine 26 serves as a coordination point for Mg(2+). Residues 60 to 64 (GITIS) form a G2 region. A G3 region spans residues 81–84 (DCPG). Residues 81–85 (DCPGH) and 136–139 (NKVD) each bind GTP. A G4 region spans residues 136 to 139 (NKVD). The G5 stretch occupies residues 174-176 (SAL).

The protein belongs to the TRAFAC class translation factor GTPase superfamily. Classic translation factor GTPase family. EF-Tu/EF-1A subfamily. As to quaternary structure, monomer.

It localises to the cytoplasm. It catalyses the reaction GTP + H2O = GDP + phosphate + H(+). In terms of biological role, GTP hydrolase that promotes the GTP-dependent binding of aminoacyl-tRNA to the A-site of ribosomes during protein biosynthesis. The polypeptide is Elongation factor Tu (Granulibacter bethesdensis (strain ATCC BAA-1260 / CGDNIH1)).